We begin with the raw amino-acid sequence, 540 residues long: Glucose-6-phosphate isomerase (540 aa).

Residue glutamate 346 is the Proton donor of the active site. Catalysis depends on residues histidine 377 and lysine 505.

Belongs to the GPI family.

The protein localises to the cytoplasm. It carries out the reaction alpha-D-glucose 6-phosphate = beta-D-fructose 6-phosphate. The protein operates within carbohydrate biosynthesis; gluconeogenesis. It functions in the pathway carbohydrate degradation; glycolysis; D-glyceraldehyde 3-phosphate and glycerone phosphate from D-glucose: step 2/4. Catalyzes the reversible isomerization of glucose-6-phosphate to fructose-6-phosphate. This chain is Glucose-6-phosphate isomerase, found in Francisella tularensis subsp. holarctica (strain FTNF002-00 / FTA).